The sequence spans 219 residues: 7-cyano-7-deazaguanine synthase (219 aa).

ATP is bound at residue 10–20 (FSGGQDSTTCL). Positions 186, 195, 198, and 201 each coordinate Zn(2+).

It belongs to the QueC family. As to quaternary structure, homodimer. The cofactor is Zn(2+).

It carries out the reaction 7-carboxy-7-deazaguanine + NH4(+) + ATP = 7-cyano-7-deazaguanine + ADP + phosphate + H2O + H(+). It participates in purine metabolism; 7-cyano-7-deazaguanine biosynthesis. Catalyzes the ATP-dependent conversion of 7-carboxy-7-deazaguanine (CDG) to 7-cyano-7-deazaguanine (preQ(0)). The sequence is that of 7-cyano-7-deazaguanine synthase from Bacillus licheniformis (strain ATCC 14580 / DSM 13 / JCM 2505 / CCUG 7422 / NBRC 12200 / NCIMB 9375 / NCTC 10341 / NRRL NRS-1264 / Gibson 46).